The sequence spans 345 residues: Dihydroorotase (345 aa).

Zn(2+)-binding residues include His-13 and His-15. Substrate-binding positions include 15–17 and Asn-41; that span reads HLR. Residues Lys-100, His-137, and His-175 each contribute to the Zn(2+) site. Lys-100 carries the N6-carboxylysine modification. His-137 provides a ligand contact to substrate. Leu-220 contacts substrate. A Zn(2+)-binding site is contributed by Asp-248. Residue Asp-248 is part of the active site. Positions 252 and 264 each coordinate substrate.

The protein belongs to the metallo-dependent hydrolases superfamily. DHOase family. Class II DHOase subfamily. As to quaternary structure, homodimer. Requires Zn(2+) as cofactor.

The enzyme catalyses (S)-dihydroorotate + H2O = N-carbamoyl-L-aspartate + H(+). It functions in the pathway pyrimidine metabolism; UMP biosynthesis via de novo pathway; (S)-dihydroorotate from bicarbonate: step 3/3. Its function is as follows. Catalyzes the reversible cyclization of carbamoyl aspartate to dihydroorotate. This is Dihydroorotase from Laribacter hongkongensis (strain HLHK9).